The primary structure comprises 317 residues: Small ribosomal subunit protein RACK1 (317 aa).

WD repeat units lie at residues 13 to 44, 61 to 91, 103 to 133, 146 to 178, 190 to 220, 231 to 260, and 281 to 311; these read GHSG…IMWK, GHSH…RLWD, GHTK…KLWN, SHTE…KVWN, GHTG…MLWD, DGGD…KIWD, and AEPP…RVWQ.

This sequence belongs to the WD repeat G protein beta family. Ribosomal protein RACK1 subfamily.

It is found in the cytoplasm. Its function is as follows. Involved in the recruitment, assembly and/or regulation of a variety of signaling molecules. Interacts with a wide variety of proteins and plays a role in many cellular processes. Required for VANGL2 membrane localization, inhibits Wnt signaling and regulates cellular polarization and oriented cell division during gastrulation. The polypeptide is Small ribosomal subunit protein RACK1 (gnb2l1) (Danio rerio (Zebrafish)).